The sequence spans 807 residues: Glycerol-3-phosphate acyltransferase (807 aa).

Positions Cys-308–Met-313 match the HXXXXD motif motif.

The protein belongs to the GPAT/DAPAT family.

The protein localises to the cell inner membrane. The enzyme catalyses sn-glycerol 3-phosphate + an acyl-CoA = a 1-acyl-sn-glycero-3-phosphate + CoA. The protein operates within phospholipid metabolism; CDP-diacylglycerol biosynthesis; CDP-diacylglycerol from sn-glycerol 3-phosphate: step 1/3. This chain is Glycerol-3-phosphate acyltransferase, found in Shewanella pealeana (strain ATCC 700345 / ANG-SQ1).